Here is a 236-residue protein sequence, read N- to C-terminus: Purine nucleoside phosphorylase DeoD-type (236 aa).

Histidine 4 is an a purine D-ribonucleoside binding site. Residues glycine 20, arginine 24, arginine 43, and 87-90 (RVGT) contribute to the phosphate site. A purine D-ribonucleoside-binding positions include 179 to 181 (EME) and 203 to 204 (SD). The Proton donor role is filled by aspartate 204.

Belongs to the PNP/UDP phosphorylase family. In terms of assembly, homohexamer; trimer of homodimers.

It catalyses the reaction a purine D-ribonucleoside + phosphate = a purine nucleobase + alpha-D-ribose 1-phosphate. The enzyme catalyses a purine 2'-deoxy-D-ribonucleoside + phosphate = a purine nucleobase + 2-deoxy-alpha-D-ribose 1-phosphate. Functionally, catalyzes the reversible phosphorolytic breakdown of the N-glycosidic bond in the beta-(deoxy)ribonucleoside molecules, with the formation of the corresponding free purine bases and pentose-1-phosphate. The protein is Purine nucleoside phosphorylase DeoD-type of Streptococcus thermophilus (strain ATCC BAA-491 / LMD-9).